The chain runs to 112 residues: UPF0251 protein MA_4245 (112 aa).

It belongs to the UPF0251 family.

The polypeptide is UPF0251 protein MA_4245 (Methanosarcina acetivorans (strain ATCC 35395 / DSM 2834 / JCM 12185 / C2A)).